The primary structure comprises 545 residues: MGSRTKFCLTLFLVSVLILCAGLALAKTDPELKQCKHQCKVQRQYDEEQKEQCAKGCEKYYKEKKGREQEEEEEEEWGSGRGRGDEFSTHEPGEKRLSQCMKQCERQDGGQQKQLCRFRCQEKYKKERREHSYSRDEEEEEEGDEEQEEEDENPYVFEDEHFTTRVKTEQGKVVVLPKFTKRSKLLRGLEKYRLAFLVANPQAFVVPNHMDADSIFFVSWGRGTITKIRENKRESMNVKQGDIIRIRAGTPFYIVNTDENEKLYIVKLLQPVNLPGHYEVFHGPGGENPESFYRAFSREVLEAALKTPRDKLEKLFEKQDEGAIVKASKEQIRAMSRRGEGPSIWPFTGKSTGTFNLFKKDPSQSNNYGQLFESEFKDYPPLQELDIMVSYVNITKGGMSGPFYNSRATKIAIVVSGEGRLEIACPHLSSSKNSGQEKSGPSYKKLSSSIRTDSVFVVPAGHPFVTVASGNQNLEILCFEVNAEGNIRYTLAGKKNIIEVMEKEAKELAFKTKGEEVDKVFGKQDEEFFFQGPKWRQHQQGRADE.

The N-terminal stretch at 1-25 (MGSRTKFCLTLFLVSVLILCAGLAL) is a signal peptide. Disordered stretches follow at residues 62–93 (KEKK…HEPG) and 129–154 (REHS…DENP). Residues 82 to 93 (GRGDEFSTHEPG) show a composition bias toward basic and acidic residues. The segment covering 136–153 (DEEEEEEGDEEQEEEDEN) has biased composition (acidic residues). The region spanning 354–517 (TFNLFKKDPS…LAFKTKGEEV (164 aa)) is the Cupin type-1 2 domain.

It belongs to the 7S seed storage protein family. In terms of tissue distribution, expressed in seed.

Seed storage protein. The chain is Vicilin Pis v 3.0101 from Pistacia vera (Pistachio).